The sequence spans 104 residues: Large ribosomal subunit protein bL21 (104 aa).

It belongs to the bacterial ribosomal protein bL21 family. Part of the 50S ribosomal subunit. Contacts protein L20.

This protein binds to 23S rRNA in the presence of protein L20. This chain is Large ribosomal subunit protein bL21, found in Streptococcus uberis (strain ATCC BAA-854 / 0140J).